The primary structure comprises 234 residues: Probable pectate lyase F (234 aa).

Positions 1–17 (MFSRIALLPAFLPVALA) are cleaved as a signal peptide. N-linked (GlcNAc...) asparagine glycosylation is found at Asn-168 and Asn-194.

This sequence belongs to the polysaccharide lyase 3 family. Ca(2+) serves as cofactor.

It is found in the secreted. It catalyses the reaction Eliminative cleavage of (1-&gt;4)-alpha-D-galacturonan to give oligosaccharides with 4-deoxy-alpha-D-galact-4-enuronosyl groups at their non-reducing ends.. Pectinolytic enzyme consist of four classes of enzymes: pectin lyase, polygalacturonase, pectin methylesterase and rhamnogalacturonase. Among pectinolytic enzymes, pectin lyase is the most important in depolymerization of pectin, since it cleaves internal glycosidic bonds of highly methylated pectins. Favors pectate, the anion, over pectin, the methyl ester. The chain is Probable pectate lyase F (plyF) from Aspergillus flavus (strain ATCC 200026 / FGSC A1120 / IAM 13836 / NRRL 3357 / JCM 12722 / SRRC 167).